A 126-amino-acid chain; its full sequence is Basic phospholipase A2 1 (126 aa).

The propeptide occupies 1-7 (SNRPMPL). 7 disulfide bridges follow: cysteine 18–cysteine 78, cysteine 33–cysteine 125, cysteine 35–cysteine 51, cysteine 50–cysteine 106, cysteine 57–cysteine 99, cysteine 67–cysteine 92, and cysteine 85–cysteine 97. Ca(2+)-binding residues include tyrosine 34, glycine 36, and glycine 38. Histidine 54 is an active-site residue. Aspartate 55 provides a ligand contact to Ca(2+). The active site involves aspartate 100.

Belongs to the phospholipase A2 family. Group I subfamily. D49 sub-subfamily. As to quaternary structure, heterodimer formed between two homologous isoforms: isoform 1 and isoform 2. Ca(2+) serves as cofactor. In terms of tissue distribution, expressed by the venom gland.

The protein resides in the secreted. The catalysed reaction is a 1,2-diacyl-sn-glycero-3-phosphocholine + H2O = a 1-acyl-sn-glycero-3-phosphocholine + a fatty acid + H(+). In terms of biological role, PLA2 catalyzes the calcium-dependent hydrolysis of the 2-acyl groups in 3-sn-phosphoglycerides. The polypeptide is Basic phospholipase A2 1 (Naja sagittifera (Andaman cobra)).